The chain runs to 370 residues: Psilocybin cluster transcription regulator (370 aa).

Disordered regions lie at residues 1–39 (MAPT…ADIS) and 102–221 (YQTG…RRRR). The segment covering 143-152 (IQHQDQQQSG) has biased composition (polar residues). Positions 183 to 202 (TSTSTPSGGRRGGRSATMGS) are enriched in low complexity. Over residues 204–218 (EWSRQRKDNHKEVER) the composition is skewed to basic and acidic residues. Residues 208–221 (QRKDNHKEVERRRR) are basic motif. In terms of domain architecture, bHLH spans 208–258 (QRKDNHKEVERRRRGNINEGINELGRIVPSGSGEKAKGAILSRAVQYIHHL). Residues 222-258 (GNINEGINELGRIVPSGSGEKAKGAILSRAVQYIHHL) are helix-loop-helix motif. The tract at residues 317–370 (VSTAGAGSGAAKDESAAGTKRRSTDGADAAGTNVEGGNNDNAEGERDGKRQRTE) is disordered. Positions 359–370 (EGERDGKRQRTE) are enriched in basic and acidic residues.

It is found in the nucleus. Its function is as follows. Transcription factor that may regulate the expression of the gene cluster that mediates the biosynthesis of psilocybin, a psychotropic tryptamine-derived natural product. This chain is Psilocybin cluster transcription regulator, found in Psilocybe cyanescens.